Here is a 213-residue protein sequence, read N- to C-terminus: Guanylate kinase (213 aa).

The 181-residue stretch at 6-186 (GLLIILSSPS…TEERLKTIVS (181 aa)) folds into the Guanylate kinase-like domain. 13-20 (SPSGAGKS) lines the ATP pocket.

It belongs to the guanylate kinase family.

The protein resides in the cytoplasm. The enzyme catalyses GMP + ATP = GDP + ADP. Functionally, essential for recycling GMP and indirectly, cGMP. This Ruegeria pomeroyi (strain ATCC 700808 / DSM 15171 / DSS-3) (Silicibacter pomeroyi) protein is Guanylate kinase.